The primary structure comprises 907 residues: MEMSLTDSDWDSSSDSGSSEHEEVEFSYGGRAQNIFSNLEETIGKIDEFLSFERGFMYGDIVRSATEPSGQSGRVINIDMFVNLESTHGKIMKEVDTKRLQKLRSISLSDYVINGPWVGRVDKIVERVSVTLDDGTNYEVLVDGQDKLVAIPPNLLEDSQYSYYPGQRVQVKLAHAPRSTTWLCGTWRGTQVMGTVCTVEAGLVYVDWVASIVMEGDRNLTAPQALQNPESLTLLPCVSHASWQLGDWCILPGSSHCDIAERQTPNVAAYNLNECHKTFQKGFNRNMQNSGLDELFVITKTKMKVAVMWQDGSCSLGVDSQQLLPVGAVNAHDFWPEQFVVEKETCNSKKWGVVKAVNAKEQTVKVQWTIQVEKEATGCVDEVMEEIVSAYELLEHPDFGFCFSDVVVKLLPEGKFDPNADTIVATEAKHLLTESDYSGAYFLSSIGVVTGFKNGSVKVKWANGSTSKVAPCEIWKMERSEYSNSSTVSSEGSVQDLSQKISQSDEASSNHQETGLVKLYSVGESCNENIPECSSFFLPKAAIGFITNLASSLFGYQGSTSVISSHSRCNDSEDQSDSEVLVQETAESYDNSETNSGEVDMTTTMVNIPIEGKGINKTLDSTLLENSRNQVRFRQFDMVNDCSDHHFLSSDKGLAQSQVTKSWVKKVQQEWSNLEANLPNTIYVRVCEERMDLLRAALVGAPGTPYHDGLFFFDIMLPPQYPHEPPMVHYHSGGMRLNPNLYESGRVCLSLLNTWSGSGTEVWNAGSSSILQLLLSFQALVLNEKPYFNEAGYDKQLGRAEGEKNSVSYNENAFLITCKSMISMLRKPPKHFEMLVKDHFTHRAQHVLAACKAYMEGVPVGSSANLQGNSTTNSTGFKIMLSKLYPKLLEAFSEIGVDCVQEIGPES.

2 disordered regions span residues 1 to 23 and 485 to 509; these read MEMS…EHEE and SSTV…EASS. Residues 495-509 are compositionally biased toward polar residues; that stretch reads QDLSQKISQSDEASS. Residues 662 to 822 enclose the UBC core domain; sequence SWVKKVQQEW…AFLITCKSMI (161 aa). Cys748 (glycyl thioester intermediate) is an active-site residue.

It belongs to the ubiquitin-conjugating enzyme family. In terms of assembly, interacts with PHO1. Interacts with NLA. In terms of tissue distribution, expressed in the vascular tissues of cotyledons, leaves, roots, sepals, filaments, anthers and junctions between the inflorescence stems and siliques.

It localises to the golgi apparatus membrane. It is found in the endoplasmic reticulum membrane. The enzyme catalyses S-ubiquitinyl-[E1 ubiquitin-activating enzyme]-L-cysteine + [E2 ubiquitin-conjugating enzyme]-L-cysteine = [E1 ubiquitin-activating enzyme]-L-cysteine + S-ubiquitinyl-[E2 ubiquitin-conjugating enzyme]-L-cysteine.. The protein operates within protein modification; protein ubiquitination. Functionally, E2 ubiquitin-protein ligase that mediates E1-dependent protein ubiquitination. Mediates PHO1 degradation through multivesicular body-mediated vacuolar proteolysis in response to inorganic phosphate (Pi) availability. Negatively regulates the protein abundance of PHF1 and PHT1s under Pi-sufficient conditions by facilitating the degradation of PHT1 proteins at the endomembrane. Functions cooperatively with NLA to regulate the abundance of the inorganic phosphate (Pi) transporters PHT1-1, PHT1-2 and PHT1-3 in different subcellular compartments. Regulates Pi homeostasis by mediating, cooperatively with NLA, polyubiquitination of PHT1-4 and its targeting for degradation. This chain is Probable ubiquitin-conjugating enzyme E2 24, found in Arabidopsis thaliana (Mouse-ear cress).